The following is an 894-amino-acid chain: ABC-transporter-regulating transcription factor (894 aa).

The segment at residues 71–98 (CDMCRKKKIKCDGKMPKCSHCINYRTDC) is a DNA-binding region (zn(2)-C6 fungal-type). A compositionally biased stretch (polar residues) spans 159-174 (NTALNSLKSPTNKFNG). A disordered region spans residues 159-219 (NTALNSLKSP…PKESETEVEG (61 aa)). Residues 175–189 (SSATSQSQHTTASRH) show a composition bias toward low complexity. The segment covering 199–210 (SPHTAATSPNSP) has biased composition (polar residues). A helical membrane pass occupies residues 649 to 669 (CVWLILYYPVSALVTLFANIL). The interval 724–797 (AEKESHSKKK…MSNPTRAFAP (74 aa)) is disordered. Residues 736–750 (AAPDEPQDLRQKTPD) show a composition bias toward basic and acidic residues. 2 stretches are compositionally biased toward polar residues: residues 751-761 (ENSVPSPSTKR) and 771-792 (LFPS…SNPT).

The protein resides in the nucleus. It is found in the membrane. Its function is as follows. Transcription factor that regulates expression of the genes related to resistance to azole compounds. In Aspergillus oryzae (strain ATCC 42149 / RIB 40) (Yellow koji mold), this protein is ABC-transporter-regulating transcription factor.